The following is a 248-amino-acid chain: UDP-N-acetyl-D-mannosaminuronic acid transferase (248 aa).

Belongs to the glycosyltransferase 26 family.

The catalysed reaction is UDP-N-acetyl-alpha-D-mannosaminouronate + N-acetyl-alpha-D-glucosaminyl-di-trans,octa-cis-undecaprenyl diphosphate = beta-D-ManNAcA-(1-&gt;4)-alpha-D-GlcNAc-di-trans,octa-cis-undecaprenyl diphosphate + UDP + H(+). It functions in the pathway bacterial outer membrane biogenesis; enterobacterial common antigen biosynthesis. Functionally, catalyzes the synthesis of Und-PP-GlcNAc-ManNAcA (Lipid II), the second lipid-linked intermediate involved in enterobacterial common antigen (ECA) synthesis. This Klebsiella pneumoniae subsp. pneumoniae (strain ATCC 700721 / MGH 78578) protein is UDP-N-acetyl-D-mannosaminuronic acid transferase.